We begin with the raw amino-acid sequence, 96 residues long: Small ribosomal subunit protein bS21 (96 aa).

The disordered stretch occupies residues 52–96 (RRARKQARKTAIREGLIAAPKPKARPVSPRRPAAPAPASSPVGAA). Low complexity predominate over residues 69–96 (AAPKPKARPVSPRRPAAPAPASSPVGAA).

It belongs to the bacterial ribosomal protein bS21 family.

The chain is Small ribosomal subunit protein bS21 from Methylobacterium nodulans (strain LMG 21967 / CNCM I-2342 / ORS 2060).